The following is a 239-amino-acid chain: mRNA turnover protein 4 homolog (239 aa).

The segment at 215–239 (FQQMGDDLPESASESTEESDSEDDD) is disordered. Residues Ser-225, Ser-229, and Ser-233 each carry the phosphoserine modification. The span at 229–239 (STEESDSEDDD) shows a compositional bias: acidic residues.

This sequence belongs to the universal ribosomal protein uL10 family. In terms of assembly, associates with the pre-60S ribosomal particle. Interacts with MINAS-60 (product of an alternative open reading frame of RBM10).

It is found in the nucleus. It localises to the nucleolus. The protein resides in the cytoplasm. In terms of biological role, component of the ribosome assembly machinery. Nuclear paralog of the ribosomal protein P0, it binds pre-60S subunits at an early stage of assembly in the nucleolus, and is replaced by P0 in cytoplasmic pre-60S subunits and mature 80S ribosomes. The protein is mRNA turnover protein 4 homolog (MRTO4) of Homo sapiens (Human).